A 267-amino-acid chain; its full sequence is MEKVTIRDFLKKKEKKEKIIMLTAYDYPSAKIISQTNLDGILVGDSLGMVVLGKENTLKVTMRDMLIHLDAVVKAKPPQLIVADMPFLSYETSIKDAVKNAGLLARHGADAVKLEGGEEMRDVVRAIVRAGIPVMGHIGLTPQRFLRIGGYRILGKREKEEEQLLKDAKTLEEAGAFSIVIENTYSDVAKKITESISIPTICIGAGPYCDGQILVIHDLLGLSDFTPYFAKKYIDLRGLIRRAIEDYISEVKEGKFPGKEHYKSRDS.

Residues D45 and D84 each contribute to the Mg(2+) site. 3-methyl-2-oxobutanoate contacts are provided by residues 45-46 (DS), D84, and K113. E115 provides a ligand contact to Mg(2+). E182 functions as the Proton acceptor in the catalytic mechanism.

Belongs to the PanB family. As to quaternary structure, homodecamer; pentamer of dimers. The cofactor is Mg(2+).

The protein resides in the cytoplasm. The enzyme catalyses 3-methyl-2-oxobutanoate + (6R)-5,10-methylene-5,6,7,8-tetrahydrofolate + H2O = 2-dehydropantoate + (6S)-5,6,7,8-tetrahydrofolate. Its pathway is cofactor biosynthesis; coenzyme A biosynthesis. Its function is as follows. Catalyzes the reversible reaction in which hydroxymethyl group from 5,10-methylenetetrahydrofolate is transferred onto alpha-ketoisovalerate to form ketopantoate. In Sulfurisphaera tokodaii (strain DSM 16993 / JCM 10545 / NBRC 100140 / 7) (Sulfolobus tokodaii), this protein is 3-methyl-2-oxobutanoate hydroxymethyltransferase.